We begin with the raw amino-acid sequence, 165 residues long: Bark lectin isoform 2 (165 aa).

Residues Asn-27 and Asn-57 are each glycosylated (N-linked (GlcNAc...) asparagine). 2 disulfides stabilise this stretch: Cys-33–Cys-80 and Cys-126–Cys-133.

The protein belongs to the protease inhibitor I3 (leguminous Kunitz-type inhibitor) family. In terms of assembly, dimer.

Its function is as follows. Glucose and N-acetylglucosamine binding lectin. Has hemagglutinating activity against human and rabbit erythrocytes which does not require divalent cations. Inhibits factor Xa and, to a lesser extent, trypsin. Does not inhibit neutrophil elastase, human plasma kallikrein, papain, human plasmin, porcine pancreatic kallikrein and bovin chymotrypsin. Has insecticidal activity against the termite species N.corniger. Induces apoptosis in prostrate cancer cell lines DU145 and PC3. In Crateva tapia (Garlic-pear tree), this protein is Bark lectin isoform 2.